We begin with the raw amino-acid sequence, 276 residues long: Bis(5'-nucleosyl)-tetraphosphatase, symmetrical (276 aa).

This sequence belongs to the Ap4A hydrolase family.

It catalyses the reaction P(1),P(4)-bis(5'-adenosyl) tetraphosphate + H2O = 2 ADP + 2 H(+). Functionally, hydrolyzes diadenosine 5',5'''-P1,P4-tetraphosphate to yield ADP. This chain is Bis(5'-nucleosyl)-tetraphosphatase, symmetrical, found in Legionella pneumophila (strain Lens).